The sequence spans 104 residues: MYNQEVKLTTKEILEKEFKTSMRGYSQDEVDKFLDVVIQDYEVFQKKIERLEQEIHQLRTEAKRAASERQTRHQTSPSVGSTNYDILQRLSNLEKKVFGNKLYE.

Positions 34 to 72 form a coiled coil; it reads LDVVIQDYEVFQKKIERLEQEIHQLRTEAKRAASERQTR. The span at 60–71 shows a compositional bias: basic and acidic residues; it reads TEAKRAASERQT. Positions 60–82 are disordered; it reads TEAKRAASERQTRHQTSPSVGST. Residues 73 to 82 show a composition bias toward polar residues; that stretch reads HQTSPSVGST.

This sequence belongs to the GpsB family. Forms polymers through the coiled coil domains. Interacts with PBP1, MreC and EzrA.

Its subcellular location is the cytoplasm. In terms of biological role, divisome component that associates with the complex late in its assembly, after the Z-ring is formed, and is dependent on DivIC and PBP2B for its recruitment to the divisome. Together with EzrA, is a key component of the system that regulates PBP1 localization during cell cycle progression. Its main role could be the removal of PBP1 from the cell pole after pole maturation is completed. Also contributes to the recruitment of PBP1 to the division complex. Not essential for septum formation. This chain is Cell cycle protein GpsB, found in Halalkalibacterium halodurans (strain ATCC BAA-125 / DSM 18197 / FERM 7344 / JCM 9153 / C-125) (Bacillus halodurans).